A 384-amino-acid chain; its full sequence is Erythronate-4-phosphate dehydrogenase (384 aa).

Residues Ser45 and Thr66 each coordinate substrate. NAD(+) is bound by residues Asp147 and Thr177. The active site involves Arg210. Asp234 provides a ligand contact to NAD(+). Glu239 is a catalytic residue. His256 functions as the Proton donor in the catalytic mechanism. Residue Gly259 participates in NAD(+) binding. Tyr260 provides a ligand contact to substrate.

Belongs to the D-isomer specific 2-hydroxyacid dehydrogenase family. PdxB subfamily. Homodimer.

Its subcellular location is the cytoplasm. The catalysed reaction is 4-phospho-D-erythronate + NAD(+) = (R)-3-hydroxy-2-oxo-4-phosphooxybutanoate + NADH + H(+). It participates in cofactor biosynthesis; pyridoxine 5'-phosphate biosynthesis; pyridoxine 5'-phosphate from D-erythrose 4-phosphate: step 2/5. In terms of biological role, catalyzes the oxidation of erythronate-4-phosphate to 3-hydroxy-2-oxo-4-phosphonooxybutanoate. This chain is Erythronate-4-phosphate dehydrogenase, found in Marinobacter nauticus (strain ATCC 700491 / DSM 11845 / VT8) (Marinobacter aquaeolei).